The chain runs to 391 residues: uncharacterized protein (391 aa).

Helical transmembrane passes span 7–27 (FILV…LPVI), 39–59 (AING…SPFM), 66–88 (LGFK…GFIW), 92–111 (VWVW…MLHF), 131–151 (SIYG…VPLV), 156–176 (SLPF…VFFL), 197–217 (FYQA…YGFL), 239–259 (VAII…PLGI), 269–289 (VLLV…VFPS), 292–312 (VIGG…TLGI), 329–349 (LLCG…GGWY), and 356–376 (ANLF…LVLG).

The protein belongs to the major facilitator superfamily.

The protein resides in the cell membrane. This is an uncharacterized protein from Bacillus subtilis (strain 168).